A 33-amino-acid chain; its full sequence is Brevinin-2CDYb (33 aa).

Cys-27 and Cys-33 are disulfide-bonded.

Belongs to the frog skin active peptide (FSAP) family. Brevinin subfamily. Expressed by the skin glands.

It is found in the secreted. Antimicrobial peptide. This chain is Brevinin-2CDYb, found in Rana dybowskii (Dybovsky's frog).